The chain runs to 115 residues: Large ribosomal subunit protein bL19 (115 aa).

The protein belongs to the bacterial ribosomal protein bL19 family.

Functionally, this protein is located at the 30S-50S ribosomal subunit interface and may play a role in the structure and function of the aminoacyl-tRNA binding site. In Clostridium tetani (strain Massachusetts / E88), this protein is Large ribosomal subunit protein bL19.